A 132-amino-acid chain; its full sequence is Small ribosomal subunit protein uS8 (132 aa).

The protein belongs to the universal ribosomal protein uS8 family. As to quaternary structure, part of the 30S ribosomal subunit. Contacts proteins S5 and S12.

One of the primary rRNA binding proteins, it binds directly to 16S rRNA central domain where it helps coordinate assembly of the platform of the 30S subunit. This Rhodococcus erythropolis (strain PR4 / NBRC 100887) protein is Small ribosomal subunit protein uS8.